Here is a 102-residue protein sequence, read N- to C-terminus: Large ribosomal subunit protein bL21 (102 aa).

Belongs to the bacterial ribosomal protein bL21 family. Part of the 50S ribosomal subunit. Contacts protein L20.

Functionally, this protein binds to 23S rRNA in the presence of protein L20. In Zymomonas mobilis subsp. mobilis (strain ATCC 31821 / ZM4 / CP4), this protein is Large ribosomal subunit protein bL21.